A 281-amino-acid chain; its full sequence is Ornithine lipid ester-linked acyl 2-hydroxylase (281 aa).

The span at 1–24 (MTESPLSAPAPTSNQSPAPEQTFG) shows a compositional bias: polar residues. Residues 1–29 (MTESPLSAPAPTSNQSPAPEQTFGTAGIA) form a disordered region.

It belongs to the aspartyl/asparaginyl beta-hydroxylase family.

The enzyme catalyses an N(2)-[(3R)-3-(2-saturated-acyloxy)acyl]-L-ornithine lipid + 2-oxoglutarate + O2 = a 2-hydroxyornithine lipid + succinate + CO2. It functions in the pathway lipid metabolism. Its function is as follows. Involved in the biosynthesis of ornithine lipids (OLs), which are phosphorus-free membrane lipids. Catalyzes the hydroxylation at the 2 position of the secondary fatty acid of OL. Contributes to symbiotic performance and acid tolerance. The protein is Ornithine lipid ester-linked acyl 2-hydroxylase of Rhizobium tropici.